A 518-amino-acid polypeptide reads, in one-letter code: Reduced folate transporter (518 aa).

At methionine 1 the chain carries N-acetylmethionine. Topologically, residues 1 to 29 (MVPTGQVAEKQACEEPRQDRELKSWRCLV) are cytoplasmic. Residues 30-50 (FYLCFFGFMAQLRPGESFITP) form a helical membrane-spanning segment. Folate is bound by residues isoleucine 48 and threonine 49. Residues 51–62 (YLLQQNFTIEQV) are Extracellular-facing. Asparagine 56 carries an N-linked (GlcNAc...) asparagine glycan. Residues 63–85 (TNEIIPVLPYSHLAVLVPIFLLT) traverse the membrane as a helical segment. Topologically, residues 86–89 (DYLR) are cytoplasmic. Residues 90–110 (YKPILILQCLSFMCVWLLLLL) form a helical membrane-spanning segment. Residues 111–114 (GTSV) are Extracellular-facing. Residues 115–137 (VHMQLMEVFYSVTMAARIAYSSY) traverse the membrane as a helical segment. The folate site is built by glutamate 121 and arginine 131. Residues 138-151 (IFSLVRPSRYQRMA) lie on the Cytoplasmic side of the membrane. A helical membrane pass occupies residues 152–176 (SYSRAAVLLGVFTSSVLGQVLWPLE). Valine 162 serves as a coordination point for folate. Residues 177–181 (QKSQN) lie on the Extracellular side of the membrane. The chain crosses the membrane as a helical span at residues 182–200 (SNMLNYISLGFIIFSLGLS). Residues 201-266 (LFLKRPKHSL…LSELVGNLRQ (66 aa)) lie on the Cytoplasmic side of the membrane. Residues 267–292 (PQLRLWCLWWVFNSAGYYLIVYYVHV) form a helical membrane-spanning segment. Residues alanine 281, glycine 282, and isoleucine 286 each coordinate folate. Residues 293 to 300 (LWSIDKNL) are Extracellular-facing. The chain crosses the membrane as a helical span at residues 301 to 323 (NYNGAVDAASTLLSAITSFSAGF). Over 324–329 (VKIRWA) the chain is Cytoplasmic. The chain crosses the membrane as a helical span at residues 330–350 (LWSKLVIASVIAIQAGLVFCM). Over 351–353 (YMV) the chain is Extracellular. Residues 354–377 (HYVTWVHKIWVLYMTYVLFRGAYQ) form a helical membrane-spanning segment. Positions 366 and 370 each coordinate folate. The Cytoplasmic portion of the chain corresponds to 378-391 (FLVPIATFQIASSL). The helical transmembrane segment at 392 to 415 (SKELCALVFGINTFLATALKTAIT) threads the bilayer. Positions 407 to 419 (ATALKTAITLVVS) are required for substrate-binding. At 416–423 (LVVSDKRG) the chain is on the extracellular side. The chain crosses the membrane as a helical span at residues 424–448 (LGLKVEKQFCIYSVYFMVLSVICFV). At 449–512 (GAVLDGVRYC…DGVEDSEASL (64 aa)) the chain is on the cytoplasmic side. A phosphoserine mark is found at serine 473, serine 478, and serine 483. Positions 480–518 (QVPSMQDGGLGGLQPSAPQLLPEDGVEDSEASLRAEAKA) are disordered.

This sequence belongs to the reduced folate carrier (RFC) transporter (TC 2.A.48) family.

The protein localises to the cell membrane. It localises to the apical cell membrane. Its subcellular location is the basolateral cell membrane. The enzyme catalyses 5-amino-1-(5-phospho-beta-D-ribosyl)imidazole-4-carboxamide(in) + (6S)-5-methyl-5,6,7,8-tetrahydrofolate(out) = 5-amino-1-(5-phospho-beta-D-ribosyl)imidazole-4-carboxamide(out) + (6S)-5-methyl-5,6,7,8-tetrahydrofolate(in). Functionally, antiporter that mediates the import of reduced folates, driven by the export of organic anions. Also acts as an importer of immunoreactive cyclic dinucleotides, but with a lower transporter activity. Mechanistically, acts as a secondary active transporter, which exports intracellular organic anions down their concentration gradients to facilitate the uptake of its substrates. Has high affinity for N5-methyltetrahydrofolate, the predominant circulating form of folate. Also mediates the import of antifolate drug methotrexate. 5-amino-4-imidazolecarboxamide riboside (AICAR), when phosphorylated to AICAR monophosphate, can serve as an organic anion for antiporter activity. The sequence is that of Reduced folate transporter from Cricetulus griseus (Chinese hamster).